A 475-amino-acid chain; its full sequence is Beta-amyrin 6-beta-monooxygenase (475 aa).

A helical membrane pass occupies residues 6-22; it reads LYSLAFALVYISLYFIF. Heme is bound at residue Cys423.

It belongs to the cytochrome P450 family. Heme serves as cofactor. In terms of tissue distribution, specifically expressed in roots.

It localises to the membrane. It carries out the reaction beta-amyrin + reduced [NADPH--hemoprotein reductase] + O2 = daturadiol + oxidized [NADPH--hemoprotein reductase] + H2O + H(+). Catalyzes the C-6 beta-hydroxylation of beta-amyrin to form daturadiol. Catalyzes the C-6 beta-hydroxylation of alpha-amyrin to form 6-beta-hydroxy-alpha-amyrin. This Solanum lycopersicum (Tomato) protein is Beta-amyrin 6-beta-monooxygenase.